A 143-amino-acid chain; its full sequence is Large ribosomal subunit protein uL11 (143 aa).

The protein belongs to the universal ribosomal protein uL11 family. In terms of assembly, part of the ribosomal stalk of the 50S ribosomal subunit. Interacts with L10 and the large rRNA to form the base of the stalk. L10 forms an elongated spine to which L12 dimers bind in a sequential fashion forming a multimeric L10(L12)X complex. Post-translationally, one or more lysine residues are methylated.

In terms of biological role, forms part of the ribosomal stalk which helps the ribosome interact with GTP-bound translation factors. The protein is Large ribosomal subunit protein uL11 of Clavibacter sepedonicus (Clavibacter michiganensis subsp. sepedonicus).